The primary structure comprises 421 residues: Subtilisin-like protease 2 (421 aa).

Residues 1–16 form the signal peptide; the sequence is MQLLNFGLLLLPFVAG. A propeptide spanning residues 17–122 is cleaved from the precursor; it reads DLAPQPEPLL…VHPDQHVYLA (106 aa). Positions 36–122 constitute an Inhibitor I9 domain; sequence QYIVTLKEGL…VHPDQHVYLA (87 aa). Positions 131–421 constitute a Peptidase S8 domain; sequence RWGLGYMSSK…ERKFTLPKYF (291 aa). Active-site charge relay system residues include Asp169 and His201. Residues Asn248, Asn261, and Asn348 are each glycosylated (N-linked (GlcNAc...) asparagine). The Charge relay system role is filled by Ser357. N-linked (GlcNAc...) asparagine glycosylation occurs at Asn388.

It belongs to the peptidase S8 family.

It is found in the secreted. Its function is as follows. Secreted subtilisin-like serine protease with keratinolytic activity that contributes to pathogenicity. This is Subtilisin-like protease 2 (SUB2) from Trichophyton equinum (Horse ringworm fungus).